Consider the following 140-residue polypeptide: uncharacterized protein (140 aa).

A compositionally biased stretch (polar residues) spans 1–19 (MGLCGSKTQPMPSQTTTVA). The interval 1-140 (MGLCGSKTQP…ERERENMIYD (140 aa)) is disordered. G2 carries N-myristoyl glycine lipidation. A lipid anchor (S-palmitoyl cysteine) is attached at C4. Positions 27-40 (INRDTVKSKQELRH) are enriched in basic and acidic residues. The segment covering 41–51 (KEKKDKKKKTQ) has biased composition (basic residues). Residues 73 to 140 (DPSKNKVSPK…ERERENMIYD (68 aa)) show a composition bias toward basic and acidic residues.

It to S.pombe new13. Post-translationally, myristoylated. The N-myristoylated protein is further palmitoylated by ERF2, PFA4 and slightly by PFA5, but not by PFA3.

It is found in the cytoplasm. The protein resides in the cytosol. This is an uncharacterized protein from Saccharomyces cerevisiae (strain ATCC 204508 / S288c) (Baker's yeast).